The following is a 944-amino-acid chain: Nonsense-mediated mRNA decay factor SMG8 (944 aa).

Disordered regions lie at residues 559-601 (LNNG…SNCC) and 629-654 (ASSE…TDNE). A compositionally biased stretch (acidic residues) spans 568 to 589 (QDEDAEEDEAEEEEGQEQEQPT). Over residues 629-640 (ASSEQLLNSEQN) the composition is skewed to polar residues. Over residues 641–650 (TTSSGTSSAD) the composition is skewed to low complexity.

It belongs to the SMG8 family.

Functionally, involved in nonsense-mediated decay (NMD) of mRNAs containing premature stop codons. Probable component of kinase complex containing nonC and recruited to stalled ribosomes. The sequence is that of Nonsense-mediated mRNA decay factor SMG8 from Drosophila melanogaster (Fruit fly).